Consider the following 164-residue polypeptide: UPF0201 protein MA_4659 (164 aa).

Belongs to the UPF0201 family.

This Methanosarcina acetivorans (strain ATCC 35395 / DSM 2834 / JCM 12185 / C2A) protein is UPF0201 protein MA_4659.